A 248-amino-acid chain; its full sequence is Aspartate/glutamate leucyltransferase (248 aa).

It belongs to the R-transferase family. Bpt subfamily.

Its subcellular location is the cytoplasm. The enzyme catalyses N-terminal L-glutamyl-[protein] + L-leucyl-tRNA(Leu) = N-terminal L-leucyl-L-glutamyl-[protein] + tRNA(Leu) + H(+). The catalysed reaction is N-terminal L-aspartyl-[protein] + L-leucyl-tRNA(Leu) = N-terminal L-leucyl-L-aspartyl-[protein] + tRNA(Leu) + H(+). Its function is as follows. Functions in the N-end rule pathway of protein degradation where it conjugates Leu from its aminoacyl-tRNA to the N-termini of proteins containing an N-terminal aspartate or glutamate. This Methylobacterium nodulans (strain LMG 21967 / CNCM I-2342 / ORS 2060) protein is Aspartate/glutamate leucyltransferase.